We begin with the raw amino-acid sequence, 168 residues long: Gremlin-2 (168 aa).

The signal sequence occupies residues 1 to 21 (MFWKLSLSLFLVAVLVKVAEA). N-linked (GlcNAc...) asparagine glycosylation is present at asparagine 40. 4 disulfide bridges follow: cysteine 73–cysteine 123, cysteine 87–cysteine 137, cysteine 97–cysteine 155, and cysteine 101–cysteine 157. Positions 73–163 (CKTQPLRQTV…QCRCMSVNLS (91 aa)) constitute a CTCK domain. Residue asparagine 161 is glycosylated (N-linked (GlcNAc...) asparagine).

Belongs to the DAN family. Homodimer. Interacts with BMP2, BMP4 and BMP7, but has lower affinity for BMP7 than for BMP2 and BMP4. Binds heparin; this impairs the interaction with BMP2. In terms of processing, N-glycosylated.

The protein localises to the secreted. Its function is as follows. Cytokine that inhibits the activity of BMP2 and BMP4 in a dose-dependent manner, and thereby modulates signaling by BMP family members. Contributes to the regulation of embryonic morphogenesis via BMP family members. Antagonizes BMP4-induced suppression of progesterone production in granulosa cells. The polypeptide is Gremlin-2 (GREM2) (Homo sapiens (Human)).